The following is a 515-amino-acid chain: RNA-splicing ligase RtcB homolog (515 aa).

The Mn(2+) site is built by Asp-129, Cys-132, His-237, His-269, and His-363. 236-240 (NHYAE) contributes to the GMP binding site. Residues 363–364 (HN), 412–415 (GGTM), Ser-419, 438–441 (HGAG), and Lys-514 each bind GMP. His-438 (GMP-histidine intermediate) is an active-site residue.

Belongs to the RtcB family. In terms of assembly, catalytic component of the tRNA-splicing ligase complex. Mn(2+) serves as cofactor.

It catalyses the reaction a 3'-end 3'-phospho-ribonucleotide-RNA + a 5'-end dephospho-ribonucleoside-RNA + GTP = a ribonucleotidyl-ribonucleotide-RNA + GMP + diphosphate. It carries out the reaction a 3'-end 2',3'-cyclophospho-ribonucleotide-RNA + a 5'-end dephospho-ribonucleoside-RNA + GTP + H2O = a ribonucleotidyl-ribonucleotide-RNA + GMP + diphosphate + H(+). Catalytic subunit of the tRNA-splicing ligase complex that acts by directly joining spliced tRNA halves to mature-sized tRNAs by incorporating the precursor-derived splice junction phosphate into the mature tRNA as a canonical 3',5'-phosphodiester. May act as an RNA ligase with broad substrate specificity, and may function toward other RNAs. This chain is RNA-splicing ligase RtcB homolog, found in Ostreococcus tauri.